The primary structure comprises 119 residues: Ribosome-binding factor A (119 aa).

It belongs to the RbfA family. In terms of assembly, monomer. Binds 30S ribosomal subunits, but not 50S ribosomal subunits or 70S ribosomes.

It localises to the cytoplasm. Functionally, one of several proteins that assist in the late maturation steps of the functional core of the 30S ribosomal subunit. Associates with free 30S ribosomal subunits (but not with 30S subunits that are part of 70S ribosomes or polysomes). Required for efficient processing of 16S rRNA. May interact with the 5'-terminal helix region of 16S rRNA. This is Ribosome-binding factor A from Coxiella burnetii (strain CbuK_Q154) (Coxiella burnetii (strain Q154)).